Reading from the N-terminus, the 321-residue chain is 2-oxoglutarate-dependent dioxygenase frbH (321 aa).

The disordered stretch occupies residues 77 to 97 (SRNSDTHGYEPVATSTGAQDD). A Fe2OG dioxygenase domain is found at 169–273 (ESLSTLSMFR…RFSIAYFLRA (105 aa)). Positions 194, 196, and 251 each coordinate Fe cation. Arg264 lines the 2-oxoglutarate pocket.

Belongs to the iron/ascorbate-dependent oxidoreductase family.

Its pathway is antifungal biosynthesis. 2-oxoglutarate-dependent dioxygenase; part of the gene cluster that mediates the biosynthesis of the antifungal antibiotic FR901469, an inhibitor of beta-1,3-glucansynthase, exerting antifungal activity against the pathogenes Candida albicans and Aspergillus fumigatus. FR901469 is a cyclic depsipeptide containing 12 amino acid residues and a fatty acid chain. The NRPS frbI contains 12 modules responsible for the formation of the depsipeptide backbone which is denoted as Acyl-Thr-Ala-Tyr-Val-4OHPro-Thr-Thr-3OHPro-threo3OHGln-Gly-Thr-Orn-OH (C71H116N14O23). The PKS frbB is probably involved in the production of the hydrocarbon chain, and the acyl-CoA ligase frbC might be involved in the transport of the chain to the peptide ptoduct of frbI. Because FR901469 contains 3 hydroxylated amino acid residues, the 3 oxygenases frbA, frbH, and frbJ might be participating in amino acid hydroxylation. As no thioesterase domains were detected in frbI or frbB, the thioesterases frbD and frbE may instead release and cyclize the products of the NRPS and PKS, respectively. The sequence is that of 2-oxoglutarate-dependent dioxygenase frbH from Dothideomycetidae sp. (strain 11243) (Fungal sp. (strain No.11243)).